The primary structure comprises 770 residues: Transducin-like enhancer protein 1 (770 aa).

Residues 1–131 form a q domain region; the sequence is MFPQSRHPTP…IIGQQQLQAQ (131 aa). Disordered regions lie at residues 128–157 and 176–348; these read LQAQ…GIPP and HLAI…PAID. A GP domain region spans residues 132–199; it reads HLSHGHGPPV…HHRDREPGTS (68 aa). Composition is skewed to basic and acidic residues over residues 178–196 and 209–246; these read AIKD…DREP and RGTD…KSDD. A ccN domain region spans residues 200–268; the sequence is NSLLVPDSLR…SPRASPAHSP (69 aa). Positions 225 to 228 match the Nuclear localization signal motif; that stretch reads KKRK. Ser-239 carries the post-translational modification Phosphoserine. The segment covering 257 to 266 has biased composition (low complexity); it reads PSSPRASPAH. A phosphoserine; by CDK1 mark is found at Ser-259, Ser-263, and Ser-267. The segment covering 267–283 has biased composition (basic and acidic residues); sequence SPRENGIDKNRLLKKDA. The tract at residues 269–450 is SP domain; the sequence is RENGIDKNRL…GGKPAYSFHV (182 aa). Low complexity predominate over residues 284-298; sequence SSSPASTASSASSTS. Residue Ser-286 is modified to Phosphoserine. Positions 300–310 are enriched in basic and acidic residues; it reads KSKEMSLHEKA. 6 WD repeats span residues 470-501, 528-558, 572-602, 614-644, 696-726, and 737-767; these read GIPR…HVYT, NRDN…SIWD, SSAP…AVWD, GHTD…RSWD, LHES…NAWR, and KESS…TVYE.

This sequence belongs to the WD repeat Groucho/TLE family. In terms of assembly, homooligomer and heterooligomer with other family members. Binds RUNX1, RUNX3, FOXA2, KDM6A, UTY, histone H3, HESX1, ESRRG and the NF-kappa-B subunit RELA. Interacts with HES1 (via WRPW motif). Binds TCF7, LEF1, TCF7L1 and TCF7L2. Interacts with SIX3. Interacts with EFNB1. Interacts with TLE4. Interacts with FOXG1/BF-1; the interaction is inhibited by TLE6/GRG6. Post-translationally, phosphorylated, probably by CDK1. The degree of phosphorylation varies throughout the cell cycle, and is highest at the G2/M transition. Becomes hyperphosphorylated in response to cell differentiation and interaction with HES1 or RUNX1. Ubiquitinated by XIAP/BIRC4. In all tissues examined, mostly in brain, liver and muscle.

The protein resides in the nucleus. In terms of biological role, transcriptional corepressor that binds to a number of transcription factors. Inhibits NF-kappa-B-regulated gene expression. Inhibits the transcriptional activation mediated by FOXA2, and by CTNNB1 and TCF family members in Wnt signaling. Enhances FOXG1/BF-1- and HES1-mediated transcriptional repression. The effects of full-length TLE family members may be modulated by association with dominant-negative AES. Unusual function as coactivator for ESRRG. The sequence is that of Transducin-like enhancer protein 1 (TLE1) from Homo sapiens (Human).